A 97-amino-acid chain; its full sequence is Co-chaperonin GroES (97 aa).

This sequence belongs to the GroES chaperonin family. In terms of assembly, heptamer of 7 subunits arranged in a ring. Interacts with the chaperonin GroEL.

Its subcellular location is the cytoplasm. Together with the chaperonin GroEL, plays an essential role in assisting protein folding. The GroEL-GroES system forms a nano-cage that allows encapsulation of the non-native substrate proteins and provides a physical environment optimized to promote and accelerate protein folding. GroES binds to the apical surface of the GroEL ring, thereby capping the opening of the GroEL channel. The sequence is that of Co-chaperonin GroES from Blochmanniella floridana.